The primary structure comprises 266 residues: Shikimate dehydrogenase (NADP(+)) (266 aa).

Shikimate is bound by residues 14–16 (SLS) and T61. K65 functions as the Proton acceptor in the catalytic mechanism. Residues N85 and D100 each coordinate shikimate. Residues 124–128 (GAGGA) and A210 contribute to the NADP(+) site. Y212 contributes to the shikimate binding site. Position 233 (G233) interacts with NADP(+).

This sequence belongs to the shikimate dehydrogenase family. Homodimer.

The enzyme catalyses shikimate + NADP(+) = 3-dehydroshikimate + NADPH + H(+). Its pathway is metabolic intermediate biosynthesis; chorismate biosynthesis; chorismate from D-erythrose 4-phosphate and phosphoenolpyruvate: step 4/7. Functionally, involved in the biosynthesis of the chorismate, which leads to the biosynthesis of aromatic amino acids. Catalyzes the reversible NADPH linked reduction of 3-dehydroshikimate (DHSA) to yield shikimate (SA). This chain is Shikimate dehydrogenase (NADP(+)), found in Halobacterium salinarum (strain ATCC 29341 / DSM 671 / R1).